Reading from the N-terminus, the 1759-residue chain is Collagen alpha-1(IV) chain (1759 aa).

The N-terminal stretch at Met1–Cys20 is a signal peptide. Residues Gln21–Lys194 constitute a propeptide, N-terminal propeptide (7S domain). Disordered regions lie at residues Pro51–Pro245, Lys269–Gly415, Ala548–Pro596, Pro618–Gly650, Ile666–Pro720, and Arg787–Gly1522. Low complexity-rich tracts occupy residues His104–Leu116, Pro140–Pro153, and Pro278–Lys293. Residues Gly195 to Trp1530 are triple-helical region. Composition is skewed to gly residues over residues Gly324–Gly345, Gly360–Gly370, and Gly379–Gly388. Composition is skewed to low complexity over residues Arg399–Pro411 and Met574–Leu595. Low complexity predominate over residues Tyr833–Pro848. Gly residues predominate over residues Gly904–Gly913. 4 stretches are compositionally biased toward low complexity: residues Tyr1037 to Pro1047, Glu1219 to Pro1232, Pro1247 to Asp1271, and Gln1281 to Pro1309. The span at Gly1310–Gly1319 shows a compositional bias: gly residues. A compositionally biased stretch (low complexity) spans Leu1341–Glu1357. Over residues Pro1410 to Leu1422 the composition is skewed to basic and acidic residues. Low complexity-rich tracts occupy residues Asp1423–Pro1437 and Pro1472–Pro1482. Over residues Gly1495–Gly1504 the composition is skewed to gly residues. The 225-residue stretch at Gly1535–Arg1759 folds into the Collagen IV NC1 domain. Cystine bridges form between Cys1550–Cys1641, Cys1583–Cys1638, Cys1595–Cys1601, Cys1660–Cys1755, Cys1694–Cys1752, and Cys1706–Cys1712. Met1623 participates in a covalent cross-link: S-Lysyl-methionine sulfilimine (Met-Lys) (interchain with K-1741). Lys1741 participates in a covalent cross-link: S-Lysyl-methionine sulfilimine (Lys-Met) (interchain with M-1623).

Belongs to the type IV collagen family. As to quaternary structure, trimers of two alpha 1(IV) and one alpha 2(IV) chain. Type IV collagen forms a mesh-like network linked through intermolecular interactions between 7S domains and between NC1 domains. In terms of processing, prolines at the third position of the tripeptide repeating unit (G-X-Y) are hydroxylated in some or all of the chains. Post-translationally, type IV collagens contain numerous cysteine residues which are involved in inter- and intramolecular disulfide bonding. 12 of these, located in the NC1 domain, are conserved in all known type IV collagens. The trimeric structure of the NC1 domains is stabilized by covalent bonds between Lys and Met residues.

The protein resides in the secreted. Its subcellular location is the extracellular space. It is found in the extracellular matrix. The protein localises to the basement membrane. Its function is as follows. Collagen type IV is specific for basement membranes. Required to restrict presynaptic growth at the neuromuscular junctions (NMJ) in late larval stage and in adult motor neurons. May play a role in axon regeneration in embryos following injury in D-type motor neurons. This Caenorhabditis elegans protein is Collagen alpha-1(IV) chain.